We begin with the raw amino-acid sequence, 624 residues long: Laccase-1 (624 aa).

An N-terminal signal peptide occupies residues M1–S20. Plastocyanin-like domains are found at residues T69–N183 and D195–Y355. Cu cation-binding residues include H117, H119, H162, and H164. Residues C138 and C578 are joined by a disulfide bond. N242, N320, and N430 each carry an N-linked (GlcNAc...) asparagine glycan. The region spanning I469–P562 is the Plastocyanin-like 3 domain. Cu cation-binding residues include H480, H483, and H485. N503 carries an N-linked (GlcNAc...) asparagine glycan. H543, C544, H545, and H549 together coordinate Cu cation. Positions D582 to S603 are disordered. Residues S592–S603 show a composition bias toward low complexity.

It belongs to the multicopper oxidase family. The cofactor is Cu cation.

It is found in the secreted. Its subcellular location is the cell wall. The catalysed reaction is 4 hydroquinone + O2 = 4 benzosemiquinone + 2 H2O. Laccase that catalyzes the oxidation of certain aromatic compounds, including L-dopa, to quinones, which then polymerize to melanin. Able to oxidize a wide variety of aromatic diphenol and diamino groups in the ortho, meta, and para positions but not monophenolic groups such as in phenol, tyramine, or tyrosine. Plays an important role in virulence. Plays a role in dissemination to extrapulmonary sites but is not involved in pulmonary growth or in elicitation of cellular immune responses in the lung. This Cryptococcus neoformans var. grubii serotype A (strain H99 / ATCC 208821 / CBS 10515 / FGSC 9487) (Filobasidiella neoformans var. grubii) protein is Laccase-1 (LAC1).